The sequence spans 136 residues: Large ribosomal subunit protein uL16 (136 aa).

This sequence belongs to the universal ribosomal protein uL16 family. Part of the 50S ribosomal subunit.

Binds 23S rRNA and is also seen to make contacts with the A and possibly P site tRNAs. This chain is Large ribosomal subunit protein uL16, found in Vibrio vulnificus (strain YJ016).